The chain runs to 411 residues: NAD-dependent dihydropyrimidine dehydrogenase subunit PreA (411 aa).

Substrate is bound by residues Asn76 and 134–136 (NFS). Cys137 functions as the Nucleophile in the catalytic mechanism. 201 to 202 (NT) contacts substrate. 4Fe-4S ferredoxin-type domains are found at residues 335 to 367 (VYPRINLDKCVGCGRCYISCYDGGHQAMEWSEK) and 369 to 398 (RTPHCNTEKCVGCLLCGHVCPVGCIELGEV). [4Fe-4S] cluster contacts are provided by Cys344, Cys347, Cys350, Cys354, Cys378, Cys381, Cys384, and Cys388.

Belongs to the dihydropyrimidine dehydrogenase family. In terms of assembly, heterotetramer of 2 PreA and 2 PreT subunits. [4Fe-4S] cluster is required as a cofactor.

The catalysed reaction is 5,6-dihydrouracil + NAD(+) = uracil + NADH + H(+). It carries out the reaction 5,6-dihydrothymine + NAD(+) = thymine + NADH + H(+). Its function is as follows. Involved in pyrimidine base degradation. Catalyzes physiologically the reduction of uracil to 5,6-dihydrouracil (DHU) by using NADH as a specific cosubstrate. It also catalyzes the reverse reaction and the reduction of thymine to 5,6-dihydrothymine (DHT). The polypeptide is NAD-dependent dihydropyrimidine dehydrogenase subunit PreA (preA) (Escherichia coli O157:H7).